Reading from the N-terminus, the 62-residue chain is Inner membrane protein p12 (62 aa).

A helical transmembrane segment spans residues 16-36 (LLIVAIVVVIMAIMLYYFWWM).

Belongs to the asfivirus inner membrane protein p12 family. In terms of assembly, homomultimer; disulfide-linked. Not glycosylated.

It localises to the virion membrane. The chain is Inner membrane protein p12 from African swine fever virus (isolate Pig/Kenya/KEN-50/1950) (ASFV).